We begin with the raw amino-acid sequence, 102 residues long: Large ribosomal subunit protein bL21 (102 aa).

This sequence belongs to the bacterial ribosomal protein bL21 family. In terms of assembly, part of the 50S ribosomal subunit. Contacts protein L20.

Its function is as follows. This protein binds to 23S rRNA in the presence of protein L20. The chain is Large ribosomal subunit protein bL21 from Nitratidesulfovibrio vulgaris (strain DSM 19637 / Miyazaki F) (Desulfovibrio vulgaris).